Here is a 271-residue protein sequence, read N- to C-terminus: 3-methyl-2-oxobutanoate hydroxymethyltransferase (271 aa).

The Mg(2+) site is built by Asp53 and Asp92. 3-methyl-2-oxobutanoate contacts are provided by residues 53–54, Asp92, and Lys120; that span reads DS. A Mg(2+)-binding site is contributed by Glu122. The active-site Proton acceptor is Glu189.

This sequence belongs to the PanB family. In terms of assembly, homodecamer; pentamer of dimers. Mg(2+) serves as cofactor.

Its subcellular location is the cytoplasm. It catalyses the reaction 3-methyl-2-oxobutanoate + (6R)-5,10-methylene-5,6,7,8-tetrahydrofolate + H2O = 2-dehydropantoate + (6S)-5,6,7,8-tetrahydrofolate. It functions in the pathway cofactor biosynthesis; (R)-pantothenate biosynthesis; (R)-pantoate from 3-methyl-2-oxobutanoate: step 1/2. Its function is as follows. Catalyzes the reversible reaction in which hydroxymethyl group from 5,10-methylenetetrahydrofolate is transferred onto alpha-ketoisovalerate to form ketopantoate. The chain is 3-methyl-2-oxobutanoate hydroxymethyltransferase from Paraburkholderia xenovorans (strain LB400).